The chain runs to 78 residues: Dihydrofolate reductase type 2 (78 aa).

Residues Lys-32 and 66-69 (VQIY) each bind NADP(+). Ile-68 is a substrate binding site.

As to quaternary structure, homotetramer.

It carries out the reaction (6S)-5,6,7,8-tetrahydrofolate + NADP(+) = 7,8-dihydrofolate + NADPH + H(+). It participates in cofactor biosynthesis; tetrahydrofolate biosynthesis; 5,6,7,8-tetrahydrofolate from 7,8-dihydrofolate: step 1/1. In terms of biological role, key enzyme in folate metabolism. Catalyzes an essential reaction for de novo glycine and purine synthesis, and for DNA precursor synthesis. The sequence is that of Dihydrofolate reductase type 2 from Escherichia coli.